Consider the following 204-residue polypeptide: Holliday junction branch migration complex subunit RuvA (204 aa).

The domain I stretch occupies residues Met-1–Met-64. The tract at residues Thr-65–Gly-143 is domain II. Positions Leu-144–Gly-151 are flexible linker. Positions Val-152–Arg-204 are domain III.

Belongs to the RuvA family. As to quaternary structure, homotetramer. Forms an RuvA(8)-RuvB(12)-Holliday junction (HJ) complex. HJ DNA is sandwiched between 2 RuvA tetramers; dsDNA enters through RuvA and exits via RuvB. An RuvB hexamer assembles on each DNA strand where it exits the tetramer. Each RuvB hexamer is contacted by two RuvA subunits (via domain III) on 2 adjacent RuvB subunits; this complex drives branch migration. In the full resolvosome a probable DNA-RuvA(4)-RuvB(12)-RuvC(2) complex forms which resolves the HJ.

The protein resides in the cytoplasm. Functionally, the RuvA-RuvB-RuvC complex processes Holliday junction (HJ) DNA during genetic recombination and DNA repair, while the RuvA-RuvB complex plays an important role in the rescue of blocked DNA replication forks via replication fork reversal (RFR). RuvA specifically binds to HJ cruciform DNA, conferring on it an open structure. The RuvB hexamer acts as an ATP-dependent pump, pulling dsDNA into and through the RuvAB complex. HJ branch migration allows RuvC to scan DNA until it finds its consensus sequence, where it cleaves and resolves the cruciform DNA. This chain is Holliday junction branch migration complex subunit RuvA, found in Rhizobium johnstonii (strain DSM 114642 / LMG 32736 / 3841) (Rhizobium leguminosarum bv. viciae).